Here is a 368-residue protein sequence, read N- to C-terminus: Peptide chain release factor 2 (368 aa).

Gln-250 bears the N5-methylglutamine mark.

This sequence belongs to the prokaryotic/mitochondrial release factor family. Methylated by PrmC. Methylation increases the termination efficiency of RF2.

It localises to the cytoplasm. Functionally, peptide chain release factor 2 directs the termination of translation in response to the peptide chain termination codons UGA and UAA. In Rickettsia felis (strain ATCC VR-1525 / URRWXCal2) (Rickettsia azadi), this protein is Peptide chain release factor 2.